The sequence spans 493 residues: Probable cytosol aminopeptidase (493 aa).

Mn(2+)-binding residues include lysine 256 and aspartate 261. The active site involves lysine 268. Positions 279, 338, and 340 each coordinate Mn(2+). Residue arginine 342 is part of the active site.

This sequence belongs to the peptidase M17 family. Requires Mn(2+) as cofactor.

It is found in the cytoplasm. The enzyme catalyses Release of an N-terminal amino acid, Xaa-|-Yaa-, in which Xaa is preferably Leu, but may be other amino acids including Pro although not Arg or Lys, and Yaa may be Pro. Amino acid amides and methyl esters are also readily hydrolyzed, but rates on arylamides are exceedingly low.. It catalyses the reaction Release of an N-terminal amino acid, preferentially leucine, but not glutamic or aspartic acids.. In terms of biological role, presumably involved in the processing and regular turnover of intracellular proteins. Catalyzes the removal of unsubstituted N-terminal amino acids from various peptides. The chain is Probable cytosol aminopeptidase from Phytoplasma australiense.